The following is a 335-amino-acid chain: Trans-1,2-dihydrobenzene-1,2-diol dehydrogenase (335 aa).

This sequence belongs to the Gfo/Idh/MocA family. As to quaternary structure, homodimer.

The enzyme catalyses (1R,2R)-1,2-dihydrobenzene-1,2-diol + NADP(+) = catechol + NADPH + H(+). It carries out the reaction D-xylose + NADP(+) = D-xylono-1,5-lactone + NADPH + H(+). This chain is Trans-1,2-dihydrobenzene-1,2-diol dehydrogenase (DHDH), found in Bos taurus (Bovine).